The following is a 163-amino-acid chain: Photosystem II extrinsic protein V (163 aa).

An N-terminal signal peptide occupies residues 1-26; the sequence is MLRKLILITVATVFFACQLLVNPVSA. Cys63, Cys66, His67, and His118 together coordinate heme c.

The protein belongs to the cytochrome c family. PsbV subfamily. PSII is composed of 1 copy each of membrane proteins PsbA, PsbB, PsbC, PsbD, PsbE, PsbF, PsbH, PsbI, PsbJ, PsbK, PsbL, PsbM, PsbT, PsbX, PsbY, PsbZ, Psb30/Ycf12, peripheral proteins PsbO, CyanoQ (PsbQ), PsbU, PsbV and a large number of cofactors. It forms dimeric complexes. Heme c serves as cofactor.

The protein resides in the cellular thylakoid membrane. In terms of biological role, one of the extrinsic, lumenal subunits of photosystem II (PSII). PSII is a light-driven water plastoquinone oxidoreductase, using light energy to abstract electrons from H(2)O, generating a proton gradient subsequently used for ATP formation. The extrinsic proteins stabilize the structure of photosystem II oxygen-evolving complex (OEC), the ion environment of oxygen evolution and protect the OEC against heat-induced inactivation. Low-potential cytochrome c that plays a role in the OEC of PSII. The protein is Photosystem II extrinsic protein V of Aphanothece halophytica.